Here is a 556-residue protein sequence, read N- to C-terminus: Polypeptide N-acetylgalactosaminyltransferase 13 (556 aa).

Residues 1 to 4 are Cytoplasmic-facing; it reads MRRF. A helical; Signal-anchor for type II membrane protein membrane pass occupies residues 5-27; the sequence is VYCKVVLATSLMWVLVDVFLLLY. Residues 28 to 556 lie on the Lumenal side of the membrane; sequence FSECNKCDDK…WLLRNMTLGT (529 aa). N-linked (GlcNAc...) asparagine glycans are attached at residues Asn-94 and Asn-116. 5 cysteine pairs are disulfide-bonded: Cys-105-Cys-338, Cys-329-Cys-407, Cys-441-Cys-458, Cys-481-Cys-496, and Cys-522-Cys-539. Residues 114 to 224 are catalytic subdomain A; the sequence is LPNTSVVIVF…LGWLEPLLAR (111 aa). Substrate-binding residues include Asp-155 and Arg-185. The Mn(2+) site is built by Asp-208 and His-210. Residues 284-346 form a catalytic subdomain B region; sequence PVRTPTMAGG…TCSHVGHVFR (63 aa). Trp-315 is a binding site for substrate. Residue His-343 coordinates Mn(2+). Residues Arg-346 and Tyr-351 each coordinate substrate. The 123-residue stretch at 428 to 550 folds into the Ricin B-type lectin domain; it reads YSLGEIRNVE…GSRSQQWLLR (123 aa). The N-linked (GlcNAc...) asparagine glycan is linked to Asn-551.

Belongs to the glycosyltransferase 2 family. GalNAc-T subfamily. Mn(2+) serves as cofactor. As to expression, specifically expressed in neuronal cells. Expressed in fetal brain, whole adult brain, cerebral cortex and cerebellum. Not expressed in other tissues tested.

It localises to the golgi apparatus membrane. It catalyses the reaction L-seryl-[protein] + UDP-N-acetyl-alpha-D-galactosamine = a 3-O-[N-acetyl-alpha-D-galactosaminyl]-L-seryl-[protein] + UDP + H(+). It carries out the reaction L-threonyl-[protein] + UDP-N-acetyl-alpha-D-galactosamine = a 3-O-[N-acetyl-alpha-D-galactosaminyl]-L-threonyl-[protein] + UDP + H(+). The protein operates within protein modification; protein glycosylation. In terms of biological role, catalyzes the initial reaction in O-linked oligosaccharide biosynthesis, the transfer of an N-acetyl-D-galactosamine (GalNAc) residue from UDP-GalNAc to a serine or threonine residue on the protein receptor. Generates GalNAc-O-Ser/Thr structure also known as Tn antigen, which itself is immunogenic but also serves as a precursor for the synthesis of different mucin-type O-glycan core structures. Contributes to the synthesis of O-linked glycans on mucins and proteoglycans of the central nervous system. May promote neurogenesis through glycosylation and stabilization of PDPN. Its function is as follows. Can glycosylate both unmodified peptides and glycopeptides that already contain an O-linked GalNAc sugar. Transfers GalNAc to Thr-/Ser-rich tandem repeats GTTPSPVPTTSTTSAP of MUC5AC, specifically on Thr-3 of non-glycosylated MUC5AC peptide, on Thr-12 and Thr-13 of preglycosylated MUC5AC at Thr-3 (MUC5AC-3), on Thr-3 of preglycosylated MUC5AC at Thr-13 (MUC5AC-13) and on Thr-12 of preglycosylated MUC5AC at Thr-3 and Thr-13 (MUC5AC-3,13). Transfers GalNAc to three consecutive serine/threonine residues on SDC3 forming a triplet-Tn epitope expressed in Purkinje cells of the developing brain. Functionally, can glycosylate both unmodified peptides and glycopeptides that already contain an O-linked GalNAc sugar. Transfers GalNAc to Thr-/Ser-rich tandem repeats GTTPSPVPTTSTTSAP of MUC5AC, specifically on Thr-3 of non-glycosylated MUC5AC peptide, on Thr-12 and Thr-13 of preglycosylated MUC5AC at Thr-3 (MUC5AC-3), on Thr-3 of preglycosylated MUC5AC at Thr-13 (MUC5AC-13) and on Thr-12 of preglycosylated MUC5AC at Thr-3 and Thr-13 (MUC5AC-3,13). The polypeptide is Polypeptide N-acetylgalactosaminyltransferase 13 (GALNT13) (Homo sapiens (Human)).